We begin with the raw amino-acid sequence, 237 residues long: Concanavalin-A (237 aa).

The Mn(2+) site is built by Glu8 and Asp10. Residues Asp10, Tyr12, Asn14, and Asp19 each coordinate Ca(2+). Tyr12 serves as a coordination point for a carbohydrate. Asp19 and His24 together coordinate Mn(2+). 99 to 100 (LY) serves as a coordination point for a carbohydrate. Position 208 (Asp208) interacts with Ca(2+). A carbohydrate is bound at residue Arg228.

Belongs to the leguminous lectin family. Homotetramer.

Glucose/D-mannose specific lectin. In Canavalia lineata (Beach bean), this protein is Concanavalin-A.